The primary structure comprises 169 residues: NADH dehydrogenase [ubiquinone] 1 alpha subcomplex assembly factor 2 (169 aa).

The disordered stretch occupies residues 116 to 169 (TSEELLPPPVQTQIKGHASAPYFGKEEPSVAPSSTGKTFQPGSWMPRDGKSHNQ). Position 134 is a phosphoserine (serine 134). Over residues 146–156 (APSSTGKTFQP) the composition is skewed to polar residues.

It belongs to the complex I NDUFA12 subunit family. In terms of assembly, interacts with ARMC9. Highly expressed in ESCC cells. Also expressed in heart, skeletal muscle, liver, and in fibroblasts.

The protein localises to the mitochondrion. Acts as a molecular chaperone for mitochondrial complex I assembly. Complex I functions in the transfer of electrons from NADH to the respiratory chain. The immediate electron acceptor for the enzyme is believed to be ubiquinone. Is involved in the initial steps of cilia formation, including removal of CP110 from the mother centrioles, docking of membrane vesicles to the mother centrioles, and establishment of the transition zone. This Homo sapiens (Human) protein is NADH dehydrogenase [ubiquinone] 1 alpha subcomplex assembly factor 2 (NDUFAF2).